The chain runs to 480 residues: UDP-glucose 6-dehydrogenase 4 (480 aa).

Residues 3-20, aspartate 33, arginine 38, threonine 90, threonine 128, and glutamate 161 contribute to the NAD(+) site; that span reads KICCIGAGYVGGPTMAVI. Residues 157–161, lysine 216, 216–223, 256–269, and glycine 269 contribute to the substrate site; these read EFLAE, KLAANAFL, and RIGSKFLNASVGFG. The Nucleophile role is filled by cysteine 272. NAD(+) is bound at residue lysine 275. Positions 334 and 335 each coordinate substrate. Arginine 342 contacts NAD(+). Arginine 447 is a binding site for substrate.

It belongs to the UDP-glucose/GDP-mannose dehydrogenase family.

It carries out the reaction UDP-alpha-D-glucose + 2 NAD(+) + H2O = UDP-alpha-D-glucuronate + 2 NADH + 3 H(+). Its pathway is nucleotide-sugar biosynthesis; UDP-alpha-D-glucuronate biosynthesis; UDP-alpha-D-glucuronate from UDP-alpha-D-glucose: step 1/1. Its activity is regulated as follows. Inhibited by UDP-xylose. Functionally, involved in the biosynthesis of UDP-glucuronic acid (UDP-GlcA), providing nucleotide sugars for cell-wall polymers. The chain is UDP-glucose 6-dehydrogenase 4 from Arabidopsis thaliana (Mouse-ear cress).